We begin with the raw amino-acid sequence, 371 residues long: MKLDHLVLKNYRNYAAVDTTFSPEINVLIGANAQGKTNLLESIYVLALARSHRTNNDKELIRFGSEFARVSGQVSRQSGSHQLELIISHQGKRARIDRIEQPKLSQYLGHFNVILFAPEDLAIVKGSPAGRRRFIDMEFGQMSPKYLYNLSQYKTFLKQRNAYLKQLKYHQAKDLVYLDVLTDSLAAFGAELITARAKLLETMSDYAATIQQDITKGRESLHFSYQTQVDPSLRGNSEQVYTALGEMFAKQQAREIEQGTSLVGPQRDDVLFIVNDKDVANFGSQGQQRTTALAVKLAEIDLMKDQTGEYPVLLLDDVLSELDAARQTHLLKAIQTKVQTFLTTTSLEGIQKEIIATPAVFKVDEGTLARA.

Residue glycine 30–threonine 37 participates in ATP binding.

The protein belongs to the RecF family.

Its subcellular location is the cytoplasm. Functionally, the RecF protein is involved in DNA metabolism; it is required for DNA replication and normal SOS inducibility. RecF binds preferentially to single-stranded, linear DNA. It also seems to bind ATP. The protein is DNA replication and repair protein RecF of Lacticaseibacillus paracasei (strain ATCC 334 / BCRC 17002 / CCUG 31169 / CIP 107868 / KCTC 3260 / NRRL B-441) (Lactobacillus paracasei).